The following is a 446-amino-acid chain: Light-independent protochlorophyllide reductase subunit N (446 aa).

3 residues coordinate [4Fe-4S] cluster: C22, C47, and C107.

It belongs to the BchN/ChlN family. In terms of assembly, protochlorophyllide reductase is composed of three subunits; ChlL, ChlN and ChlB. Forms a heterotetramer of two ChlB and two ChlN subunits. The cofactor is [4Fe-4S] cluster.

The protein localises to the plastid. The protein resides in the chloroplast. It catalyses the reaction chlorophyllide a + oxidized 2[4Fe-4S]-[ferredoxin] + 2 ADP + 2 phosphate = protochlorophyllide a + reduced 2[4Fe-4S]-[ferredoxin] + 2 ATP + 2 H2O. The protein operates within porphyrin-containing compound metabolism; chlorophyll biosynthesis (light-independent). Functionally, component of the dark-operative protochlorophyllide reductase (DPOR) that uses Mg-ATP and reduced ferredoxin to reduce ring D of protochlorophyllide (Pchlide) to form chlorophyllide a (Chlide). This reaction is light-independent. The NB-protein (ChlN-ChlB) is the catalytic component of the complex. The chain is Light-independent protochlorophyllide reductase subunit N from Mesostigma viride (Green alga).